Reading from the N-terminus, the 333-residue chain is T-cell surface glycoprotein CD1b1 (333 aa).

The first 17 residues, 1-17 (MLLVALALLAFLFPAGD), serve as a signal peptide directing secretion. The Extracellular portion of the chain corresponds to 18-302 (TQNALQWPTS…LYWGHSISIG (285 aa)). N-linked (GlcNAc...) asparagine glycans are attached at residues asparagine 38, asparagine 75, and asparagine 146. Disulfide bonds link cysteine 120–cysteine 184, cysteine 149–cysteine 163, and cysteine 224–cysteine 279. Positions 197 to 295 (PDIQKQVKPD…LEGQDIILYW (99 aa)) constitute an Ig-like domain. A helical membrane pass occupies residues 303 to 323 (WIILAVLVPCLIVLVLFVLWF). Residues 324-333 (YRRWSYEDIL) are Cytoplasmic-facing. Residues 329 to 332 (YEDI) carry the Internalization signal motif.

In terms of assembly, heterodimer with B2M (beta-2-microglobulin). Interacts with saposin C.

It is found in the cell membrane. It localises to the endosome membrane. The protein resides in the lysosome membrane. Antigen-presenting protein that binds self and non-self lipid and glycolipid antigens and presents them to T-cell receptors on natural killer T-cells. This chain is T-cell surface glycoprotein CD1b1 (CD1B1), found in Cavia porcellus (Guinea pig).